The primary structure comprises 87 residues: Small ribosomal subunit protein uS19 (87 aa).

This sequence belongs to the universal ribosomal protein uS19 family.

In terms of biological role, protein S19 forms a complex with S13 that binds strongly to the 16S ribosomal RNA. In Mycoplasma pneumoniae (strain ATCC 29342 / M129 / Subtype 1) (Mycoplasmoides pneumoniae), this protein is Small ribosomal subunit protein uS19 (rpsS).